The sequence spans 310 residues: Glutamyl-Q tRNA(Asp) synthetase (310 aa).

Residues 24 to 28 and glutamate 60 each bind L-glutamate; that span reads RFAPS. The 'HIGH' region motif lies at 27–37; the sequence is PSPSGPLHFGS. Cysteine 116, cysteine 118, tyrosine 130, and cysteine 134 together coordinate Zn(2+). The L-glutamate site is built by tyrosine 187 and arginine 205. Positions 243-247 match the 'KMSKS' region motif; it reads KLSKQ. Lysine 246 contacts ATP.

This sequence belongs to the class-I aminoacyl-tRNA synthetase family. GluQ subfamily. It depends on Zn(2+) as a cofactor.

Its function is as follows. Catalyzes the tRNA-independent activation of glutamate in presence of ATP and the subsequent transfer of glutamate onto a tRNA(Asp). Glutamate is transferred on the 2-amino-5-(4,5-dihydroxy-2-cyclopenten-1-yl) moiety of the queuosine in the wobble position of the QUC anticodon. The protein is Glutamyl-Q tRNA(Asp) synthetase of Photobacterium profundum (strain SS9).